We begin with the raw amino-acid sequence, 168 residues long: Prolyl-tRNA synthetase associated domain-containing protein 1 (168 aa).

The protein belongs to the PRORSD1 family.

This is Prolyl-tRNA synthetase associated domain-containing protein 1 (prorsd1p) from Xenopus laevis (African clawed frog).